A 188-amino-acid polypeptide reads, in one-letter code: MEIKLFGKWDSETVTVKDPSLKSYVSVAPVLVPHTAGRNSKKSFDKSKMNIVERLANKLMANQENTGKKHETLAIVEEALTIIENRTKENPVQVLVDALENSGPREETTRISYGGIAFLQSVDVSPSRRLDTAFRNIALGASQSAHKNKKTVAQCLADEIIFASKADMQKSFAVRKKEEKERVAQSAR.

The protein belongs to the universal ribosomal protein uS7 family. As to quaternary structure, part of the 30S ribosomal subunit.

In terms of biological role, one of the primary rRNA binding proteins, it binds directly to 16S rRNA where it nucleates assembly of the head domain of the 30S subunit. Is located at the subunit interface close to the decoding center. The chain is Small ribosomal subunit protein uS7 from Methanococcus maripaludis (strain C7 / ATCC BAA-1331).